We begin with the raw amino-acid sequence, 187 residues long: UPF0301 protein KPK_0728 (187 aa).

This sequence belongs to the UPF0301 (AlgH) family.

This Klebsiella pneumoniae (strain 342) protein is UPF0301 protein KPK_0728.